Here is a 350-residue protein sequence, read N- to C-terminus: Glycerol-3-phosphate dehydrogenase [NAD(+)], cytoplasmic (350 aa).

Residues 11–16 (GSGNWG), Phe-98, Lys-121, and Ala-155 contribute to the NAD(+) site. Residue Lys-121 coordinates substrate. Catalysis depends on Lys-206, which acts as the Proton acceptor. NAD(+) contacts are provided by Arg-270 and Gln-299. Substrate is bound at residue 270-271 (RN).

Belongs to the NAD-dependent glycerol-3-phosphate dehydrogenase family. As to quaternary structure, homodimer.

The protein resides in the cytoplasm. It catalyses the reaction sn-glycerol 3-phosphate + NAD(+) = dihydroxyacetone phosphate + NADH + H(+). Its pathway is phospholipid metabolism; alpha-glycerophosphate cycle. In Drosophila ezoana (Fruit fly), this protein is Glycerol-3-phosphate dehydrogenase [NAD(+)], cytoplasmic (Gpdh1).